A 190-amino-acid chain; its full sequence is Adenylate kinase (190 aa).

Residue 12–17 (GSGKTT) participates in ATP binding. The segment at 33–62 (STGDLLRAEVASGSELGKTIDSFISKGNLV) is NMP. AMP contacts are provided by residues Thr-34, Arg-39, 60-62 (NLV), 87-90 (GYPR), and Gln-94. Positions 129 to 135 (GRARGAD) are LID. Residue Arg-130 coordinates ATP. Residues Arg-132 and Arg-144 each contribute to the AMP site. Residue Arg-172 participates in ATP binding.

Belongs to the adenylate kinase family. As to quaternary structure, monomer.

It is found in the cytoplasm. It carries out the reaction AMP + ATP = 2 ADP. It functions in the pathway purine metabolism; AMP biosynthesis via salvage pathway; AMP from ADP: step 1/1. Its function is as follows. Catalyzes the reversible transfer of the terminal phosphate group between ATP and AMP. Plays an important role in cellular energy homeostasis and in adenine nucleotide metabolism. The chain is Adenylate kinase from Campylobacter lari (strain RM2100 / D67 / ATCC BAA-1060).